A 374-amino-acid polypeptide reads, in one-letter code: MSVPAFIDISEEDQAAELRAYLKSKGAELSEENSEGGLHVDLAQIIEACDVCLKEDDKDVESVMNSVVSLLLILEPDKQEALIESLCEKLVKFREGERPSLRLQLLSNLFHGMDKNTPVRYTVYCSLIKVAASCGAIQYIPTELDQVRKWISDWKLTTEKKHTLLRLLYEALVDCKKSDAASKVMVELLGSYTEDNASQARVDAHRCIVRALKDPNAFLFDHLLTLKPVKFLEGELIHDLLTIFVSAKLASYVKFYQNNKDFIDSLGLLHEQNMAKMRLLTFMGMAVENKEISFDTMQQELQIGADDVEAFVIDAVRTKMVYCKIDQTQRKVVVSHSTHRTFGKQQWQQLYDTLNAWKQNLNKVKNSLLSLSDT.

Serine 2 carries the post-translational modification N-acetylserine. A phosphoserine mark is found at serine 2 and serine 152. Positions 180 to 339 (AASKVMVELL…RKVVVSHSTH (160 aa)) constitute a PCI domain. Lysine 254 carries the N6-acetyllysine modification. Serine 367 carries the phosphoserine modification.

This sequence belongs to the eIF-3 subunit M family. In terms of assembly, component of the eukaryotic translation initiation factor 3 (eIF-3) complex, which is composed of 13 subunits: EIF3A, EIF3B, EIF3C, EIF3D, EIF3E, EIF3F, EIF3G, EIF3H, EIF3I, EIF3J, EIF3K, EIF3L and EIF3M. The eIF-3 complex appears to include 3 stable modules: module A is composed of EIF3A, EIF3B, EIF3G and EIF3I; module B is composed of EIF3F, EIF3H, and EIF3M; and module C is composed of EIF3C, EIF3D, EIF3E, EIF3K and EIF3L. EIF3C of module C binds EIF3B of module A and EIF3H of module B, thereby linking the three modules. EIF3J is a labile subunit that binds to the eIF-3 complex via EIF3B. The eIF-3 complex interacts with RPS6KB1 under conditions of nutrient depletion. Mitogenic stimulation leads to binding and activation of a complex composed of MTOR and RPTOR, leading to phosphorylation and release of RPS6KB1 and binding of EIF4B to eIF-3.

The protein resides in the cytoplasm. Its function is as follows. Component of the eukaryotic translation initiation factor 3 (eIF-3) complex, which is required for several steps in the initiation of protein synthesis. The eIF-3 complex associates with the 40S ribosome and facilitates the recruitment of eIF-1, eIF-1A, eIF-2:GTP:methionyl-tRNAi and eIF-5 to form the 43S pre-initiation complex (43S PIC). The eIF-3 complex stimulates mRNA recruitment to the 43S PIC and scanning of the mRNA for AUG recognition. The eIF-3 complex is also required for disassembly and recycling of post-termination ribosomal complexes and subsequently prevents premature joining of the 40S and 60S ribosomal subunits prior to initiation. The eIF-3 complex specifically targets and initiates translation of a subset of mRNAs involved in cell proliferation, including cell cycling, differentiation and apoptosis, and uses different modes of RNA stem-loop binding to exert either translational activation or repression. The polypeptide is Eukaryotic translation initiation factor 3 subunit M (Eif3m) (Mus musculus (Mouse)).